The following is a 363-amino-acid chain: Aminomethyltransferase (363 aa).

Belongs to the GcvT family. As to quaternary structure, the glycine cleavage system is composed of four proteins: P, T, L and H.

The catalysed reaction is N(6)-[(R)-S(8)-aminomethyldihydrolipoyl]-L-lysyl-[protein] + (6S)-5,6,7,8-tetrahydrofolate = N(6)-[(R)-dihydrolipoyl]-L-lysyl-[protein] + (6R)-5,10-methylene-5,6,7,8-tetrahydrofolate + NH4(+). Its function is as follows. The glycine cleavage system catalyzes the degradation of glycine. The sequence is that of Aminomethyltransferase from Nitrosomonas europaea (strain ATCC 19718 / CIP 103999 / KCTC 2705 / NBRC 14298).